A 227-amino-acid chain; its full sequence is Probable methylthioribulose-1-phosphate dehydratase (227 aa).

Substrate is bound at residue Cys87. Positions 105 and 107 each coordinate Zn(2+). Glu129 acts as the Proton donor/acceptor in catalysis. Residue His185 participates in Zn(2+) binding.

Belongs to the aldolase class II family. MtnB subfamily. Requires Zn(2+) as cofactor.

The protein localises to the cytoplasm. The catalysed reaction is 5-(methylsulfanyl)-D-ribulose 1-phosphate = 5-methylsulfanyl-2,3-dioxopentyl phosphate + H2O. It functions in the pathway amino-acid biosynthesis; L-methionine biosynthesis via salvage pathway; L-methionine from S-methyl-5-thio-alpha-D-ribose 1-phosphate: step 2/6. Catalyzes the dehydration of methylthioribulose-1-phosphate (MTRu-1-P) into 2,3-diketo-5-methylthiopentyl-1-phosphate (DK-MTP-1-P). The polypeptide is Probable methylthioribulose-1-phosphate dehydratase (Drosophila mojavensis (Fruit fly)).